The following is a 181-amino-acid chain: Adenine phosphoribosyltransferase (181 aa).

It belongs to the purine/pyrimidine phosphoribosyltransferase family. In terms of assembly, homodimer.

Its subcellular location is the cytoplasm. It carries out the reaction AMP + diphosphate = 5-phospho-alpha-D-ribose 1-diphosphate + adenine. Its pathway is purine metabolism; AMP biosynthesis via salvage pathway; AMP from adenine: step 1/1. Functionally, catalyzes a salvage reaction resulting in the formation of AMP, that is energically less costly than de novo synthesis. The polypeptide is Adenine phosphoribosyltransferase (Rhodopseudomonas palustris (strain BisB5)).